A 579-amino-acid chain; its full sequence is Arginine--tRNA ligase (579 aa).

The short motif at 128–138 (PNLAKEMHVGH) is the 'HIGH' region element.

It belongs to the class-I aminoacyl-tRNA synthetase family. Monomer.

Its subcellular location is the cytoplasm. It carries out the reaction tRNA(Arg) + L-arginine + ATP = L-arginyl-tRNA(Arg) + AMP + diphosphate. The protein is Arginine--tRNA ligase of Pseudomonas syringae pv. syringae (strain B728a).